The chain runs to 216 residues: Uracil phosphoribosyltransferase (216 aa).

A GTP-binding site is contributed by K30–R34. 5-phospho-alpha-D-ribose 1-diphosphate is bound by residues R80, R105, and D140 to T148. Residues I203 and G208–A210 contribute to the uracil site. 5-phospho-alpha-D-ribose 1-diphosphate is bound at residue D209.

It belongs to the UPRTase family. It depends on Mg(2+) as a cofactor.

The catalysed reaction is UMP + diphosphate = 5-phospho-alpha-D-ribose 1-diphosphate + uracil. It functions in the pathway pyrimidine metabolism; UMP biosynthesis via salvage pathway; UMP from uracil: step 1/1. Its activity is regulated as follows. Allosterically activated by GTP. Catalyzes the conversion of uracil and 5-phospho-alpha-D-ribose 1-diphosphate (PRPP) to UMP and diphosphate. The sequence is that of Uracil phosphoribosyltransferase from Sulfurisphaera tokodaii (strain DSM 16993 / JCM 10545 / NBRC 100140 / 7) (Sulfolobus tokodaii).